Reading from the N-terminus, the 217-residue chain is Large ribosomal subunit protein uL3 (217 aa).

Residues 134 to 154 are disordered; sequence DATHGNSLSHRAPGSIGQCQT. The residue at position 153 (Q153) is an N5-methylglutamine.

Belongs to the universal ribosomal protein uL3 family. In terms of assembly, part of the 50S ribosomal subunit. Forms a cluster with proteins L14 and L19. In terms of processing, methylated by PrmB.

Functionally, one of the primary rRNA binding proteins, it binds directly near the 3'-end of the 23S rRNA, where it nucleates assembly of the 50S subunit. In Coxiella burnetii (strain Dugway 5J108-111), this protein is Large ribosomal subunit protein uL3.